The following is a 309-amino-acid chain: tRNA dimethylallyltransferase (309 aa).

10 to 17 (GPTAVGKT) serves as a coordination point for ATP. 12–17 (TAVGKT) lines the substrate pocket. Positions 35-38 (DSMQ) are interaction with substrate tRNA.

It belongs to the IPP transferase family. As to quaternary structure, monomer. Mg(2+) serves as cofactor.

The enzyme catalyses adenosine(37) in tRNA + dimethylallyl diphosphate = N(6)-dimethylallyladenosine(37) in tRNA + diphosphate. Catalyzes the transfer of a dimethylallyl group onto the adenine at position 37 in tRNAs that read codons beginning with uridine, leading to the formation of N6-(dimethylallyl)adenosine (i(6)A). This Clostridium botulinum (strain Alaska E43 / Type E3) protein is tRNA dimethylallyltransferase.